The chain runs to 284 residues: Elongation factor Ts (284 aa).

An involved in Mg(2+) ion dislocation from EF-Tu region spans residues 80–83; that stretch reads TDFV.

The protein belongs to the EF-Ts family.

It localises to the cytoplasm. Functionally, associates with the EF-Tu.GDP complex and induces the exchange of GDP to GTP. It remains bound to the aminoacyl-tRNA.EF-Tu.GTP complex up to the GTP hydrolysis stage on the ribosome. This chain is Elongation factor Ts, found in Photobacterium profundum (strain SS9).